Here is a 60-residue protein sequence, read N- to C-terminus: Cytotoxin 1 (60 aa).

Intrachain disulfides connect C3–C21, C14–C38, C42–C53, and C54–C59.

The protein belongs to the three-finger toxin family. Short-chain subfamily. Type IA cytotoxin sub-subfamily. In terms of assembly, monomer, or heterodimer with alpha-cobratoxin (AC P01391); disulfide-linked. As to expression, expressed by the venom gland.

The protein resides in the secreted. Its subcellular location is the target cell membrane. Functionally, monomer: shows cytolytic activity (apoptosis is induced in C2C12 cells, but no cytotoxicity is observed on INS-1E). In addition, this toxin shows insulinotropic activity that may be mediated by the modulation of potassium channels (Kv). It induces the increase of intracellular calcium release. It induces insulin secretion from rat INS-1E cells in absence and in presence of glucose, without affecting cell viability and integrity. In presence of glucose, the insulinotropic activity is increased, suggesting a possible synergistic effect with glucose. Its insulinotropic activity does not involve GLP-1R signaling. In terms of biological role, heterodimer: has no cytolytic activity, but retains most of the alpha-cobratoxin capacity to compete with alpha-bungarotoxin for binding to Torpedo and alpha-7/CHRNA7 nicotinic acetylcholine receptors (nAChRs) as well as to Lymnea stagnalis acetylcholine-binding protein. This is Cytotoxin 1 from Naja kaouthia (Monocled cobra).